Consider the following 106-residue polypeptide: Small ribosomal subunit protein uS10 (106 aa).

The protein belongs to the universal ribosomal protein uS10 family. In terms of assembly, part of the 30S ribosomal subunit.

Involved in the binding of tRNA to the ribosomes. This is Small ribosomal subunit protein uS10 from Prochlorococcus marinus (strain MIT 9211).